Reading from the N-terminus, the 161-residue chain is Cyclic pyranopterin monophosphate synthase (161 aa).

Substrate contacts are provided by residues 75–77 (LCH) and 113–114 (ME). D128 is a catalytic residue.

Belongs to the MoaC family. Homohexamer; trimer of dimers.

The enzyme catalyses (8S)-3',8-cyclo-7,8-dihydroguanosine 5'-triphosphate = cyclic pyranopterin phosphate + diphosphate. Its pathway is cofactor biosynthesis; molybdopterin biosynthesis. Catalyzes the conversion of (8S)-3',8-cyclo-7,8-dihydroguanosine 5'-triphosphate to cyclic pyranopterin monophosphate (cPMP). In Cupriavidus pinatubonensis (strain JMP 134 / LMG 1197) (Cupriavidus necator (strain JMP 134)), this protein is Cyclic pyranopterin monophosphate synthase.